The primary structure comprises 216 residues: Elongation factor Ts (216 aa).

The tract at residues 81–84 is involved in Mg(2+) ion dislocation from EF-Tu; it reads TDFV.

It belongs to the EF-Ts family.

It localises to the cytoplasm. Its function is as follows. Associates with the EF-Tu.GDP complex and induces the exchange of GDP to GTP. It remains bound to the aminoacyl-tRNA.EF-Tu.GTP complex up to the GTP hydrolysis stage on the ribosome. This Geobacter sulfurreducens (strain ATCC 51573 / DSM 12127 / PCA) protein is Elongation factor Ts.